Consider the following 115-residue polypeptide: Large ribosomal subunit protein uL24 (115 aa).

Belongs to the universal ribosomal protein uL24 family. In terms of assembly, part of the 50S ribosomal subunit.

One of two assembly initiator proteins, it binds directly to the 5'-end of the 23S rRNA, where it nucleates assembly of the 50S subunit. Its function is as follows. One of the proteins that surrounds the polypeptide exit tunnel on the outside of the subunit. The polypeptide is Large ribosomal subunit protein uL24 (Beutenbergia cavernae (strain ATCC BAA-8 / DSM 12333 / CCUG 43141 / JCM 11478 / NBRC 16432 / NCIMB 13614 / HKI 0122)).